A 349-amino-acid chain; its full sequence is MARPQDPPRGFFPFGNPFKNLSSKNSVLSSKLLPLLNNFETNLASSISKLVPKEKSDILTVSWMKQAMESLCETHNGIKTLITDLELPVSDWEDKWVDVYLDISVKLLDLCNAFSSELTRLNQGHLLLQFALHNLEANSPQNLSKAQSSLDSWKQHIVSKNPRIENCRAILSSLVQTLNLPKVKNSAKGKVLMRALYGVKVKTLYISGVFAAAFSGSSQNLMYLTVSNELPWAQSFMEVQNTMNAEIKNIFLSDGLTVLKELEAVASGVKKLYPAIQQGSIDPISLQPLKDSVTELSNGIDLVSKEVDCFFKILLSGRDTLLENLRSMGASTLQATSPKKAAGKNYRGF.

The N-terminal 43 residues, 1–43 (MARPQDPPRGFFPFGNPFKNLSSKNSVLSSKLLPLLNNFETNL), are a transit peptide targeting the chloroplast.

In terms of tissue distribution, expressed in roots, hypocotyls, cotyledons, leaves, flowers and siliques.

The protein localises to the plastid. The protein resides in the chloroplast. Its function is as follows. Required for normal root and shoot development. Prevents constitutive production of a root mobile carotenoid-derived signaling compound that is capable of arresting shoot and leaf development. This Arabidopsis thaliana (Mouse-ear cress) protein is Protein BPS1, chloroplastic.